Consider the following 1006-residue polypeptide: Unconventional myosin-Id (1006 aa).

N-acetylalanine is present on alanine 2. The Myosin motor domain occupies 9 to 695 (FGKADFVLMD…TLFTLEELRA (687 aa)). Position 102–109 (102–109 (GESGAGKT)) interacts with ATP. Serine 200 bears the Phosphoserine mark. Tyrosine 536 is subject to Phosphotyrosine. The actin-binding stretch occupies residues 572–594 (MIALVDNLASKEPYYVRCIKPND). 2 IQ domains span residues 699–719 (VRVV…MRYK) and 721–741 (TKAA…SYIH). Residues 776 to 896 (LQSIFNRWRA…MDPTKQYKVM (121 aa)) form an interaction with calmodulin region. Residues 812-1005 (GQRADLGLQR…RSGFILSVPG (194 aa)) enclose the TH1 domain.

The protein belongs to the TRAFAC class myosin-kinesin ATPase superfamily. Myosin family. In terms of assembly, interacts (via the two IQ motifs) with calmodulin. Binds an additional calmodulin chain via a third, C-terminal region. Interacts with F-actin. As to expression, detected on tracheal epithelial cells, and on epithelial cells and brush border cells in duodenum, jejunum and ileum. Detected on myelinated white matter in the cerebellum, and the myelinated part of the optic nerve. Detected on mature oligodendrocites. Detected on the outside of the myelin sheet that surrounds axons (at protein level). Ubiquitous. Highest levels in adult brain, and spinal cord. Moderate levels in lung, kidney, liver and spleen. Low levels in testis and heart (at protein level).

Its subcellular location is the cytoplasm. The protein resides in the perikaryon. The protein localises to the cell projection. It is found in the dendrite. It localises to the early endosome. Its subcellular location is the cell cortex. Its function is as follows. Unconventional myosin that functions as actin-based motor protein with ATPase activity. Plays a role in endosomal protein trafficking, and especially in the transfer of cargo proteins from early to recycling endosomes. Required for normal planar cell polarity in ciliated tracheal cells, for normal rotational polarity of cilia, and for coordinated, unidirectional ciliary movement in the trachea. Required for normal, polarized cilia organization in brain ependymal epithelial cells. In Rattus norvegicus (Rat), this protein is Unconventional myosin-Id (Myo1d).